The following is a 246-amino-acid chain: Putative carboxymethylenebutenolidase (246 aa).

Residues C127, D183, and H215 contribute to the active site.

It belongs to the dienelactone hydrolase family.

The enzyme catalyses 2-(5-oxo-2,5-dihydrofuran-2-ylidene)acetate + H2O = 4-oxohex-2-enedioate + H(+). The polypeptide is Putative carboxymethylenebutenolidase (Synechocystis sp. (strain ATCC 27184 / PCC 6803 / Kazusa)).